The primary structure comprises 563 residues: Beta-catenin-like protein 1 (563 aa).

An N-acetylmethionine modification is found at methionine 1. The interval 1 to 81 (MDVGELLSYQ…EEEEPLDESS (81 aa)) is disordered. The Nuclear localization signal signature appears at 16 to 33 (KRPRDDEEEELKTRRKQT). The span at 34–45 (GPRERGRYREEE) shows a compositional bias: basic and acidic residues. A compositionally biased stretch (acidic residues) spans 66–78 (DGEEEEEEEEPLD). HEAT repeat units follow at residues 79-129 (ESSV…VVAT) and 134-176 (YHLL…TLHE). N6-acetyllysine is present on lysine 91. The short motif at 130 to 140 (MPDLYHLLVEL) is the Nuclear export signal (NES) element. ARM repeat units lie at residues 178–228 (EEGA…MAEF), 229–273 (RPEM…LQDN), 274–323 (DENR…CLML), 325–363 (SNRE…AMIG), and 364–417 (PEGT…LLRN). Residue serine 389 is modified to Phosphoserine. A coiled-coil region spans residues 476–540 (DMEDEFYLRR…HIIKEYAENI (65 aa)). Serine 545 carries the phosphoserine modification.

As to quaternary structure, component of the PRP19-CDC5L splicing complex composed of a core complex comprising a homotetramer of PRPF19, CDC5L, PLRG1 and BCAS2, and at least three less stably associated proteins CTNNBL1, CWC15 and HSPA8. Interacts directly with CWC15 and CDC5L in the complex. Interacts with AICDA; the interaction is important for the antibody diversification activity of AICDA. Interacts with PRPF31 (via its NLS). Interacts (via its N-terminal NLS) with KPNA1 and KPNA2.

Its subcellular location is the nucleus. In terms of biological role, component of the PRP19-CDC5L complex that forms an integral part of the spliceosome and is required for activating pre-mRNA splicing. Participates in AID/AICDA-mediated somatic hypermutation (SHM) and class-switch recombination (CSR), 2 processes resulting in the production of high-affinity, mutated isotype-switched antibodies. The sequence is that of Beta-catenin-like protein 1 (Ctnnbl1) from Mus musculus (Mouse).